Consider the following 357-residue polypeptide: UDP-N-acetylglucosamine--N-acetylmuramyl-(pentapeptide) pyrophosphoryl-undecaprenol N-acetylglucosamine transferase (357 aa).

UDP-N-acetyl-alpha-D-glucosamine contacts are provided by residues 12–14, Asn124, Arg162, Ser190, Ile244, 263–268, and Gln289; these read TGG and ALTVAE.

This sequence belongs to the glycosyltransferase 28 family. MurG subfamily.

The protein resides in the cell inner membrane. It carries out the reaction di-trans,octa-cis-undecaprenyl diphospho-N-acetyl-alpha-D-muramoyl-L-alanyl-D-glutamyl-meso-2,6-diaminopimeloyl-D-alanyl-D-alanine + UDP-N-acetyl-alpha-D-glucosamine = di-trans,octa-cis-undecaprenyl diphospho-[N-acetyl-alpha-D-glucosaminyl-(1-&gt;4)]-N-acetyl-alpha-D-muramoyl-L-alanyl-D-glutamyl-meso-2,6-diaminopimeloyl-D-alanyl-D-alanine + UDP + H(+). The protein operates within cell wall biogenesis; peptidoglycan biosynthesis. Cell wall formation. Catalyzes the transfer of a GlcNAc subunit on undecaprenyl-pyrophosphoryl-MurNAc-pentapeptide (lipid intermediate I) to form undecaprenyl-pyrophosphoryl-MurNAc-(pentapeptide)GlcNAc (lipid intermediate II). The polypeptide is UDP-N-acetylglucosamine--N-acetylmuramyl-(pentapeptide) pyrophosphoryl-undecaprenol N-acetylglucosamine transferase (Alkalilimnicola ehrlichii (strain ATCC BAA-1101 / DSM 17681 / MLHE-1)).